The chain runs to 454 residues: C4-dicarboxylate transport protein (454 aa).

A run of 9 helical transmembrane segments spans residues Val33–Gly53, Leu66–Met86, Ile101–Val121, Glu148–Ala168, Gly170–Gly190, Leu210–Ile230, Met243–Val263, Leu354–Ile374, and Ala377–Ile397.

This sequence belongs to the dicarboxylate/amino acid:cation symporter (DAACS) (TC 2.A.23) family.

The protein localises to the cell inner membrane. Responsible for the transport of dicarboxylates such as succinate, fumarate, and malate from the periplasm across the membrane. The polypeptide is C4-dicarboxylate transport protein (Sinorhizobium medicae (strain WSM419) (Ensifer medicae)).